Reading from the N-terminus, the 295-residue chain is Fatty acyl-CoA reductase (295 aa).

21-28 (TGASSGIG) contributes to the NADP(+) binding site. Ser-153 contributes to the substrate binding site. The active-site Proton acceptor is the Tyr-166.

Belongs to the short-chain dehydrogenases/reductases (SDR) family.

It carries out the reaction hexadecanal + NADP(+) + CoA = hexadecanoyl-CoA + NADPH + H(+). Catalyzes the NADPH-dependent reduction of long chain acyl-CoA (with chain lengths of 14 to 22 carbons) to the corresponding aldehyde. The protein is Fatty acyl-CoA reductase (acr1) of Acinetobacter baylyi (strain ATCC 33305 / BD413 / ADP1).